A 357-amino-acid chain; its full sequence is Membrane-bound lytic murein transglycosylase C (357 aa).

An N-terminal signal peptide occupies residues 1 to 15 (MKKYLLLALLPFLYA). A lipid anchor (N-palmitoyl cysteine) is attached at Cys-16. Cys-16 carries the S-diacylglycerol cysteine lipid modification.

The protein belongs to the transglycosylase Slt family.

The protein resides in the cell outer membrane. The catalysed reaction is Exolytic cleavage of the (1-&gt;4)-beta-glycosidic linkage between N-acetylmuramic acid (MurNAc) and N-acetylglucosamine (GlcNAc) residues in peptidoglycan, from either the reducing or the non-reducing ends of the peptidoglycan chains, with concomitant formation of a 1,6-anhydrobond in the MurNAc residue.. Functionally, murein-degrading enzyme. May play a role in recycling of muropeptides during cell elongation and/or cell division. The polypeptide is Membrane-bound lytic murein transglycosylase C (Haemophilus influenzae (strain 86-028NP)).